A 381-amino-acid chain; its full sequence is MASPTQGQVITCKAAVAYEPNKPLVIEDVQVAPPQAGEVRVKILFTALCHTDHYTWSGKDPEGLFPCILGHEAAGIVESVGEGVTDVQPGDHVIPCYQAECKECKFCKSGKTNLCGKVRSATGVGVMMNDMKSRFSVNGKPIYHFMGTSTFSQYTVVHDVSVAKINPQAPLDKVCLLGCGVPTGLGAVWNTAKVESGSVVAVFGLGTVGLAVAEGAKAAGASRVIGIDIDNKKFDVAKNFGVTEFVNPKEHDKPIQQVLVDLTDGGVDYSFECIGNVSIMRAALECSDKGWGTSVIVGVAASGQEISTRPFQLVTGRVWKGTAFGGFKSRTQVPWLVDKYMKKEIKVDEYITHNMNLADINDAFHLLHEGGCLRCVLAMQI.

Cysteine 49 provides a ligand contact to Zn(2+). Position 50 (histidine 50) interacts with NAD(+). Residues threonine 51 and histidine 71 each contribute to the an alcohol site. Residues histidine 71, glutamate 72, cysteine 101, cysteine 104, cysteine 107, cysteine 115, and cysteine 179 each coordinate Zn(2+). Residues 204-209 (GLGTVG), aspartate 228, lysine 233, isoleucine 274, 297-299 (VGV), 322-324 (TAF), and arginine 374 contribute to the NAD(+) site.

Belongs to the zinc-containing alcohol dehydrogenase family. Class-III subfamily. In terms of assembly, homodimer. The cofactor is Zn(2+). As to expression, expressed at low levels in the leaves.

It is found in the cytoplasm. The catalysed reaction is a primary alcohol + NAD(+) = an aldehyde + NADH + H(+). It catalyses the reaction a secondary alcohol + NAD(+) = a ketone + NADH + H(+). It carries out the reaction S-(hydroxymethyl)glutathione + NADP(+) = S-formylglutathione + NADPH + H(+). The enzyme catalyses S-(hydroxymethyl)glutathione + NAD(+) = S-formylglutathione + NADH + H(+). The protein is Alcohol dehydrogenase class-3 (FDH) of Zea mays (Maize).